The chain runs to 119 residues: Large ribosomal subunit protein bL20 (119 aa).

It belongs to the bacterial ribosomal protein bL20 family.

In terms of biological role, binds directly to 23S ribosomal RNA and is necessary for the in vitro assembly process of the 50S ribosomal subunit. It is not involved in the protein synthesizing functions of that subunit. In Streptococcus equi subsp. equi (strain 4047), this protein is Large ribosomal subunit protein bL20.